Here is a 163-residue protein sequence, read N- to C-terminus: Nucleotide-binding protein YajQ (163 aa).

The protein belongs to the YajQ family.

Its function is as follows. Nucleotide-binding protein. This chain is Nucleotide-binding protein YajQ, found in Salmonella heidelberg (strain SL476).